Here is a 217-residue protein sequence, read N- to C-terminus: Pyrophosphatase PpaX (217 aa).

The active-site Nucleophile is the Asp-11.

It belongs to the HAD-like hydrolase superfamily. PpaX family. Mg(2+) serves as cofactor.

The enzyme catalyses diphosphate + H2O = 2 phosphate + H(+). In terms of biological role, hydrolyzes pyrophosphate formed during P-Ser-HPr dephosphorylation by HPrK/P. Might play a role in controlling the intracellular pyrophosphate pool. This Listeria monocytogenes serotype 4b (strain CLIP80459) protein is Pyrophosphatase PpaX.